Consider the following 361-residue polypeptide: 3-dehydroquinate synthase (361 aa).

Residues 60–65 (DAEAAK), 94–98 (GATTD), 118–119 (TT), lysine 131, and lysine 140 contribute to the NAD(+) site. Zn(2+) contacts are provided by glutamate 173, histidine 242, and histidine 258.

The protein belongs to the sugar phosphate cyclases superfamily. Dehydroquinate synthase family. Requires Co(2+) as cofactor. Zn(2+) serves as cofactor. It depends on NAD(+) as a cofactor.

The protein localises to the cytoplasm. The enzyme catalyses 7-phospho-2-dehydro-3-deoxy-D-arabino-heptonate = 3-dehydroquinate + phosphate. The protein operates within metabolic intermediate biosynthesis; chorismate biosynthesis; chorismate from D-erythrose 4-phosphate and phosphoenolpyruvate: step 2/7. Functionally, catalyzes the conversion of 3-deoxy-D-arabino-heptulosonate 7-phosphate (DAHP) to dehydroquinate (DHQ). The protein is 3-dehydroquinate synthase of Cutibacterium acnes (strain DSM 16379 / KPA171202) (Propionibacterium acnes).